The following is a 473-amino-acid chain: Hexaprenyl pyrophosphate synthase, mitochondrial (473 aa).

The isopentenyl diphosphate site is built by lysine 84, arginine 87, and histidine 186. 2 residues coordinate Mg(2+): aspartate 193 and aspartate 197. Arginine 202 contributes to the an all-trans-polyprenyl diphosphate binding site. Arginine 203 is an isopentenyl diphosphate binding site. Residues lysine 323, threonine 324, glutamine 361, and lysine 378 each coordinate an all-trans-polyprenyl diphosphate.

This sequence belongs to the FPP/GGPP synthase family. The cofactor is Mg(2+).

The protein resides in the mitochondrion inner membrane. The protein operates within cofactor biosynthesis; ubiquinone biosynthesis. Assembly of polyisoprenoid side chains. The polyprenyl synthase of coenzyme Q biosynthesis catalyzes the formation from isopentenyl diphosphate of all trans-polyprenyl pyrophosphates generally ranging in length of between 6 and 10 isoprene units depending on the species. The sequence is that of Hexaprenyl pyrophosphate synthase, mitochondrial (COQ1) from Saccharomyces cerevisiae (strain ATCC 204508 / S288c) (Baker's yeast).